Consider the following 174-residue polypeptide: Frataxin homolog, mitochondrial (174 aa).

A mitochondrion-targeting transit peptide spans M1–M21.

Belongs to the frataxin family. Monomer. Forms a 24-mer complex made up of 8 copies of a trimeric subcomplex. Increments in mitochondrial iron uptake induce stepwise assembly of species ranging from trimers to 24-mers. Interacts with ISU1 with a 1 to 1 stoichiometry; the interaction is direct. Interacts with YHB1, SDH1, SDH2, AIM45 and CIR1. Post-translationally, processed in two steps by mitochondrial processing peptidase (MPP). MPP first cleaves the precursor to intermediate form and subsequently converts the intermediate to mature size protein.

The protein localises to the mitochondrion matrix. The catalysed reaction is 4 Fe(2+) + O2 + 4 H(+) = 4 Fe(3+) + 2 H2O. Its function is as follows. Promotes the biosynthesis of heme as well as the assembly and repair of iron-sulfur clusters by delivering Fe(2+) to proteins involved in these pathways. Plays a role in the protection against iron-catalyzed oxidative stress through its ability to catalyze the oxidation of Fe(2+) to Fe(3+). Can store large amounts of the metal in the form of a ferrihydrite mineral by oligomerization. May be involved in regulation of the mitochondrial electron transport chain. This Saccharomyces cerevisiae (strain ATCC 204508 / S288c) (Baker's yeast) protein is Frataxin homolog, mitochondrial.